Reading from the N-terminus, the 379-residue chain is Chaperone protein DnaJ (379 aa).

The 66-residue stretch at 7-72 (CYYETLEVDR…DKRAAYDRYG (66 aa)) folds into the J domain. A CR-type zinc finger spans residues 135–213 (GKTAQIEIPV…CSGAGRIERE (79 aa)). Cys148, Cys151, Cys165, Cys168, Cys187, Cys190, Cys201, and Cys204 together coordinate Zn(2+). CXXCXGXG motif repeat units lie at residues 148–155 (CESCSGTG), 165–172 (CSMCGGAG), 187–194 (CPGCQGRG), and 201–208 (CPACSGAG).

It belongs to the DnaJ family. In terms of assembly, homodimer. The cofactor is Zn(2+).

Its subcellular location is the cytoplasm. Functionally, participates actively in the response to hyperosmotic and heat shock by preventing the aggregation of stress-denatured proteins and by disaggregating proteins, also in an autonomous, DnaK-independent fashion. Unfolded proteins bind initially to DnaJ; upon interaction with the DnaJ-bound protein, DnaK hydrolyzes its bound ATP, resulting in the formation of a stable complex. GrpE releases ADP from DnaK; ATP binding to DnaK triggers the release of the substrate protein, thus completing the reaction cycle. Several rounds of ATP-dependent interactions between DnaJ, DnaK and GrpE are required for fully efficient folding. Also involved, together with DnaK and GrpE, in the DNA replication of plasmids through activation of initiation proteins. In Rhodopseudomonas palustris (strain BisB18), this protein is Chaperone protein DnaJ.